We begin with the raw amino-acid sequence, 928 residues long: Interphotoreceptor matrix proteoglycan 1 (928 aa).

The signal sequence occupies residues 1–20; that stretch reads MHLKTGLIFLAICLALQVQG. Residues 26–50 form a disordered region; it reads SKTNHGEAKQLADASGSDKTERTTK. A compositionally biased stretch (basic and acidic residues) spans 29 to 49; sequence NHGEAKQLADASGSDKTERTT. Asparagine 143 is a glycosylation site (N-linked (GlcNAc...) asparagine). Positions 164-182 are enriched in basic and acidic residues; it reads QERKDEISTDKTGGKKLED. A disordered region spans residues 164–191; sequence QERKDEISTDKTGGKKLEDIPSVSTGPP. Asparagine 203 and asparagine 212 each carry an N-linked (GlcNAc...) asparagine glycan. Residues 231–356 form the SEA 1 domain; it reads AEQMVEFSVT…TKLTVTDLQQ (126 aa). Disordered stretches follow at residues 441–481 and 494–522; these read LSRE…TEDI and ALVS…NDLI. Residues 466 to 477 are compositionally biased toward basic and acidic residues; the sequence is PSREPPHDRSPD. Residues 735–848 form the SEA 2 domain; that stretch reads KELVVFFSLR…YSLDIEPADQ (114 aa). Asparagine 756 and asparagine 780 each carry an N-linked (GlcNAc...) asparagine glycan. The short motif at 785 to 793 is the Heparin- and hyaluronan-binding element; sequence KQLEILNFR. 2 N-linked (GlcNAc...) asparagine glycosylation sites follow: asparagine 794 and asparagine 812.

Post-translationally, highly glycosylated (N- and O-linked carbohydrates and sialic acid). Abundantly expressed in the retina (at protein level). Localizes to the photoreceptor layer of the interphotoreceptor matrix of the retina (at protein level).

It is found in the cell projection. It localises to the cilium. The protein resides in the photoreceptor outer segment. Its subcellular location is the secreted. The protein localises to the extracellular space. It is found in the extracellular matrix. It localises to the interphotoreceptor matrix. The protein resides in the photoreceptor inner segment. Its function is as follows. Chondroitin sulfate-, heparin- and hyaluronan-binding protein. May serve to form a basic macromolecular scaffold comprising the insoluble interphotoreceptor matrix. This Gallus gallus (Chicken) protein is Interphotoreceptor matrix proteoglycan 1.